The sequence spans 196 residues: ATP-dependent Clp protease proteolytic subunit (196 aa).

Ser-101 acts as the Nucleophile in catalysis. His-126 is a catalytic residue.

The protein belongs to the peptidase S14 family. In terms of assembly, component of the chloroplastic Clp protease core complex.

The protein localises to the plastid. It localises to the chloroplast stroma. The enzyme catalyses Hydrolysis of proteins to small peptides in the presence of ATP and magnesium. alpha-casein is the usual test substrate. In the absence of ATP, only oligopeptides shorter than five residues are hydrolyzed (such as succinyl-Leu-Tyr-|-NHMec, and Leu-Tyr-Leu-|-Tyr-Trp, in which cleavage of the -Tyr-|-Leu- and -Tyr-|-Trp bonds also occurs).. Functionally, cleaves peptides in various proteins in a process that requires ATP hydrolysis. Has a chymotrypsin-like activity. Plays a major role in the degradation of misfolded proteins. The protein is ATP-dependent Clp protease proteolytic subunit of Pinus thunbergii (Japanese black pine).